We begin with the raw amino-acid sequence, 173 residues long: uncharacterized protein (173 aa).

Positions 1–25 (MPVVTAVGRRRGFAMPWVSTARSGA) are cleaved as a signal peptide.

This is an uncharacterized protein from Mycobacterium bovis (strain ATCC BAA-935 / AF2122/97).